We begin with the raw amino-acid sequence, 138 residues long: Phosphoribosyl-AMP cyclohydrolase (138 aa).

Position 84 (Asp-84) interacts with Mg(2+). Cys-85 lines the Zn(2+) pocket. Mg(2+) is bound by residues Asp-86 and Asp-88. The Zn(2+) site is built by Cys-102 and Cys-109.

This sequence belongs to the PRA-CH family. As to quaternary structure, homodimer. Requires Mg(2+) as cofactor. The cofactor is Zn(2+).

The protein localises to the cytoplasm. The catalysed reaction is 1-(5-phospho-beta-D-ribosyl)-5'-AMP + H2O = 1-(5-phospho-beta-D-ribosyl)-5-[(5-phospho-beta-D-ribosylamino)methylideneamino]imidazole-4-carboxamide. It participates in amino-acid biosynthesis; L-histidine biosynthesis; L-histidine from 5-phospho-alpha-D-ribose 1-diphosphate: step 3/9. Functionally, catalyzes the hydrolysis of the adenine ring of phosphoribosyl-AMP. The chain is Phosphoribosyl-AMP cyclohydrolase from Burkholderia lata (strain ATCC 17760 / DSM 23089 / LMG 22485 / NCIMB 9086 / R18194 / 383).